The following is a 575-amino-acid chain: Golgi-associated kinase 1A (575 aa).

The first 29 residues, Met1–Ala29, serve as a signal peptide directing secretion. Positions Val30 to Arg119 are cleaved as a propeptide — removed in mature form. Residues Thr53–Thr58 form an O-glycosylated at one site region. Over residues Val143 to His153 the composition is skewed to basic and acidic residues. The interval Val143–Glu162 is disordered. Positions Arg437–Pro575 are cleaved as a propeptide — removed in mature form. Asn566 carries N-linked (GlcNAc...) asparagine glycosylation.

Belongs to the GASK family. O-glycosylated with core 1 or possibly core 8 glycans. In terms of processing, proteolytically cleaved. Cleaved at Arg-120 and Arg-437 leading to a processed mature product of 35 kDa. The cleavage takes place in the Golgi apparatus. In terms of tissue distribution, expressed in skin, lung and colon (at protein level).

The protein localises to the secreted. It is found in the endoplasmic reticulum. It localises to the golgi apparatus. Its subcellular location is the membrane. The protein resides in the caveola. In Homo sapiens (Human), this protein is Golgi-associated kinase 1A.